Here is a 429-residue protein sequence, read N- to C-terminus: Mannose-6-phosphate isomerase (429 aa).

N-acetylserine is present on Ser-2. The residue at position 107 (Ser-107) is a Phosphoserine. Zn(2+) contacts are provided by Gln-109, His-111, Glu-136, and His-281. Arg-300 is an active-site residue.

The protein belongs to the mannose-6-phosphate isomerase type 1 family. As to quaternary structure, monomer. Zn(2+) is required as a cofactor.

It is found in the cytoplasm. It catalyses the reaction D-mannose 6-phosphate = D-fructose 6-phosphate. The protein operates within nucleotide-sugar biosynthesis; GDP-alpha-D-mannose biosynthesis; alpha-D-mannose 1-phosphate from D-fructose 6-phosphate: step 1/2. With respect to regulation, can be inhibited by an excess of zinc. In terms of biological role, involved in the synthesis of the GDP-mannose and dolichol-phosphate-mannose required for a number of critical mannosyl transfer reactions. The sequence is that of Mannose-6-phosphate isomerase (PMI40) from Saccharomyces cerevisiae (strain ATCC 204508 / S288c) (Baker's yeast).